We begin with the raw amino-acid sequence, 135 residues long: Large ribosomal subunit protein eL32 (135 aa).

This sequence belongs to the eukaryotic ribosomal protein eL32 family. Component of the large ribosomal subunit.

Its subcellular location is the cytoplasm. In terms of biological role, component of the large ribosomal subunit. The ribosome is a large ribonucleoprotein complex responsible for the synthesis of proteins in the cell. The protein is Large ribosomal subunit protein eL32 (rpl32) of Ictalurus punctatus (Channel catfish).